The sequence spans 147 residues: Hemoglobin subunit beta (147 aa).

The 145-residue stretch at 3-147 (EWTDKERTII…VVSALGKQYH (145 aa)) folds into the Globin domain. The heme b site is built by His64 and His93.

Belongs to the globin family. Heterotetramer of two alpha chains and two beta chains. Red blood cells.

Its function is as follows. Involved in oxygen transport from gills to the various peripheral tissues. This is Hemoglobin subunit beta from Trematomus newnesi (Dusky notothen).